Reading from the N-terminus, the 122-residue chain is Large ribosomal subunit protein uL14 (122 aa).

The protein belongs to the universal ribosomal protein uL14 family. In terms of assembly, part of the 50S ribosomal subunit. Forms a cluster with proteins L3 and L19. In the 70S ribosome, L14 and L19 interact and together make contacts with the 16S rRNA in bridges B5 and B8.

Functionally, binds to 23S rRNA. Forms part of two intersubunit bridges in the 70S ribosome. The protein is Large ribosomal subunit protein uL14 of Desulforamulus reducens (strain ATCC BAA-1160 / DSM 100696 / MI-1) (Desulfotomaculum reducens).